A 258-amino-acid chain; its full sequence is Protein STAY-GREEN LIKE, chloroplastic (258 aa).

It belongs to the staygreen family. In terms of tissue distribution, strongly expressed in leaves, stems and panicles, and at lower levels in roots and seeds.

Its function is as follows. Promotes chlorophyll degradation in leaves. May be involved in LHCI proteins degradation, regulating the balance between LHCI and LHCII. The polypeptide is Protein STAY-GREEN LIKE, chloroplastic (Oryza sativa subsp. japonica (Rice)).